The sequence spans 49 residues: uncharacterized protein (49 aa).

This is an uncharacterized protein from Enterobacteria phage T4 (Bacteriophage T4).